A 77-amino-acid polypeptide reads, in one-letter code: Protein OPG146 (77 aa).

This sequence belongs to the orthopoxvirus OPG146 family. In terms of assembly, interacts with capping enzyme RAP94/OPG109, the two large RNA polymerase subunits RPO147/OPG105 and RPO132/OPG151, the two early transcription factor subunits OPG185 and OPG133, one of the capping enzyme subunits OPG113, the nucleoside triphosphate phosphohydrolase OPG123, two core proteins OPG129 and OPG138, and a virion protein OPG064.

It localises to the virion. It is found in the host cytoplasm. The protein resides in the host nucleus. In terms of biological role, plays a role in the maturation of immature virions to infectious particles. May also participate in viral transcription. The polypeptide is Protein OPG146 (OPG146) (Homo sapiens (Human)).